The following is a 543-amino-acid chain: uncharacterized protein (543 aa).

The region spanning 203 to 460 (NYPYIIAEIE…FLWFKEKVRE (258 aa)) is the Radical SAM core domain. Positions 470–534 (VVPKGTILRD…RRSITGKVVR (65 aa)) constitute a TRAM domain.

This is an uncharacterized protein from Methanocaldococcus jannaschii (strain ATCC 43067 / DSM 2661 / JAL-1 / JCM 10045 / NBRC 100440) (Methanococcus jannaschii).